Reading from the N-terminus, the 502-residue chain is ATP synthase subunit alpha (502 aa).

ATP is bound at residue 169-176; the sequence is GDRQTGKT.

Belongs to the ATPase alpha/beta chains family. In terms of assembly, F-type ATPases have 2 components, CF(1) - the catalytic core - and CF(0) - the membrane proton channel. CF(1) has five subunits: alpha(3), beta(3), gamma(1), delta(1), epsilon(1). CF(0) has three main subunits: a(1), b(2) and c(9-12). The alpha and beta chains form an alternating ring which encloses part of the gamma chain. CF(1) is attached to CF(0) by a central stalk formed by the gamma and epsilon chains, while a peripheral stalk is formed by the delta and b chains.

The protein localises to the cell membrane. It catalyses the reaction ATP + H2O + 4 H(+)(in) = ADP + phosphate + 5 H(+)(out). Its function is as follows. Produces ATP from ADP in the presence of a proton gradient across the membrane. The alpha chain is a regulatory subunit. The chain is ATP synthase subunit alpha from Bacillus velezensis (strain DSM 23117 / BGSC 10A6 / LMG 26770 / FZB42) (Bacillus amyloliquefaciens subsp. plantarum).